The following is an 85-amino-acid chain: Translation initiation factor IF-1 1 (85 aa).

The S1-like domain maps to methionine 1–isoleucine 72.

It belongs to the IF-1 family. In terms of assembly, component of the 30S ribosomal translation pre-initiation complex which assembles on the 30S ribosome in the order IF-2 and IF-3, IF-1 and N-formylmethionyl-tRNA(fMet); mRNA recruitment can occur at any time during PIC assembly.

The protein localises to the cytoplasm. In terms of biological role, one of the essential components for the initiation of protein synthesis. Stabilizes the binding of IF-2 and IF-3 on the 30S subunit to which N-formylmethionyl-tRNA(fMet) subsequently binds. Helps modulate mRNA selection, yielding the 30S pre-initiation complex (PIC). Upon addition of the 50S ribosomal subunit IF-1, IF-2 and IF-3 are released leaving the mature 70S translation initiation complex. The protein is Translation initiation factor IF-1 1 of Paracidovorax citrulli (strain AAC00-1) (Acidovorax citrulli).